Reading from the N-terminus, the 378-residue chain is Chaperone protein DnaJ (378 aa).

The J domain occupies 6-70 (DYYDVLGVSR…QKRQQYDQFG (65 aa)). Residues 137-219 (GKTSEISYSR…CHGKGVKTQK (83 aa)) form a CR-type zinc finger. Residues Cys150, Cys153, Cys167, Cys170, Cys193, Cys196, Cys207, and Cys210 each contribute to the Zn(2+) site. CXXCXGXG motif repeat units follow at residues 150–157 (CEVCKGSG), 167–174 (CDKCGGSG), 193–200 (CDKCAGSG), and 207–214 (CHNCHGKG).

Belongs to the DnaJ family. As to quaternary structure, homodimer. It depends on Zn(2+) as a cofactor.

Its subcellular location is the cytoplasm. Its function is as follows. Participates actively in the response to hyperosmotic and heat shock by preventing the aggregation of stress-denatured proteins and by disaggregating proteins, also in an autonomous, DnaK-independent fashion. Unfolded proteins bind initially to DnaJ; upon interaction with the DnaJ-bound protein, DnaK hydrolyzes its bound ATP, resulting in the formation of a stable complex. GrpE releases ADP from DnaK; ATP binding to DnaK triggers the release of the substrate protein, thus completing the reaction cycle. Several rounds of ATP-dependent interactions between DnaJ, DnaK and GrpE are required for fully efficient folding. Also involved, together with DnaK and GrpE, in the DNA replication of plasmids through activation of initiation proteins. The chain is Chaperone protein DnaJ from Lactobacillus delbrueckii subsp. bulgaricus (strain ATCC BAA-365 / Lb-18).